Reading from the N-terminus, the 414-residue chain is DNA primase large subunit PriL (414 aa).

4 residues coordinate [4Fe-4S] cluster: Cys-251, Cys-352, Cys-370, and Cys-376.

This sequence belongs to the eukaryotic-type primase large subunit family. In terms of assembly, heterodimer of a small subunit (PriS) and a large subunit (PriL). [4Fe-4S] cluster serves as cofactor.

Its function is as follows. Regulatory subunit of DNA primase, an RNA polymerase that catalyzes the synthesis of short RNA molecules used as primers for DNA polymerase during DNA replication. Stabilizes and modulates the activity of the small subunit, increasing the rate of DNA synthesis, and conferring RNA synthesis capability. The DNA polymerase activity may enable DNA primase to also catalyze primer extension after primer synthesis. May also play a role in DNA repair. The chain is DNA primase large subunit PriL from Methanocaldococcus jannaschii (strain ATCC 43067 / DSM 2661 / JAL-1 / JCM 10045 / NBRC 100440) (Methanococcus jannaschii).